The primary structure comprises 198 residues: MIAYLSGAVREVREASAVIVAGGVGYEVFCPASTLGRLVPGQPAELNIRHVVREDAQLLFGFLDTDSLRLFDLLIGVSGVGPKLALSLLSALPVTAVAQGLLSGDVKLLSSVSGVGKKTAERLVLELQNKVPEHLAAGAPVSAGKAALTSTAGRDAIEALLALGFREPQVRSVVAELLAADPEQSADALIRKGLGKLR.

The segment at 1–63 (MIAYLSGAVR…EDAQLLFGFL (63 aa)) is domain I. The interval 64–142 (DTDSLRLFDL…EHLAAGAPVS (79 aa)) is domain II. The segment at 143–150 (AGKAALTS) is flexible linker. Residues 150-198 (STAGRDAIEALLALGFREPQVRSVVAELLAADPEQSADALIRKGLGKLR) are domain III.

The protein belongs to the RuvA family. In terms of assembly, homotetramer. Forms an RuvA(8)-RuvB(12)-Holliday junction (HJ) complex. HJ DNA is sandwiched between 2 RuvA tetramers; dsDNA enters through RuvA and exits via RuvB. An RuvB hexamer assembles on each DNA strand where it exits the tetramer. Each RuvB hexamer is contacted by two RuvA subunits (via domain III) on 2 adjacent RuvB subunits; this complex drives branch migration. In the full resolvosome a probable DNA-RuvA(4)-RuvB(12)-RuvC(2) complex forms which resolves the HJ.

The protein resides in the cytoplasm. Its function is as follows. The RuvA-RuvB-RuvC complex processes Holliday junction (HJ) DNA during genetic recombination and DNA repair, while the RuvA-RuvB complex plays an important role in the rescue of blocked DNA replication forks via replication fork reversal (RFR). RuvA specifically binds to HJ cruciform DNA, conferring on it an open structure. The RuvB hexamer acts as an ATP-dependent pump, pulling dsDNA into and through the RuvAB complex. HJ branch migration allows RuvC to scan DNA until it finds its consensus sequence, where it cleaves and resolves the cruciform DNA. The protein is Holliday junction branch migration complex subunit RuvA of Deinococcus geothermalis (strain DSM 11300 / CIP 105573 / AG-3a).